The primary structure comprises 439 residues: Ornithine aminotransferase, mitochondrial (439 aa).

The N-terminal 35 residues, 1 to 35 (MLSKLASLQTVAALRRGLRTSVASATSVATKKTEQ), are a transit peptide targeting the mitochondrion. Residues K49 and K66 each carry the N6-acetyllysine modification. K102 is subject to N6-succinyllysine. At K107 the chain carries N6-acetyllysine; alternate. An N6-succinyllysine; alternate modification is found at K107. K292 carries the post-translational modification N6-(pyridoxal phosphate)lysine. K362 is modified (N6-acetyllysine; alternate). Position 362 is an N6-succinyllysine; alternate (K362). An N6-acetyllysine mark is found at K386 and K392. At K405 the chain carries N6-acetyllysine; alternate. K405 bears the N6-succinyllysine; alternate mark. The residue at position 421 (K421) is an N6-acetyllysine.

Homohexamer. Requires pyridoxal 5'-phosphate as cofactor. Expressed in the head and flagellum of epididymal sperm but not in testicular sperm (at protein level).

It localises to the mitochondrion matrix. The enzyme catalyses L-ornithine + 2-oxoglutarate = L-glutamate 5-semialdehyde + L-glutamate. Its pathway is amino-acid biosynthesis; L-proline biosynthesis; L-glutamate 5-semialdehyde from L-ornithine: step 1/1. Catalyzes the reversible interconversion of L-ornithine and 2-oxoglutarate to L-glutamate semialdehyde and L-glutamate. This is Ornithine aminotransferase, mitochondrial (Oat) from Rattus norvegicus (Rat).